The sequence spans 609 residues: UvrABC system protein C (609 aa).

The GIY-YIG domain occupies 16 to 94 (SSPGVYRMYD…IKQYMPKYNV (79 aa)). A UVR domain is found at 203–238 (HQVMSVLVGKMEQAASDMRYEQAALYRDQITALRRV).

This sequence belongs to the UvrC family. As to quaternary structure, interacts with UvrB in an incision complex.

Its subcellular location is the cytoplasm. The UvrABC repair system catalyzes the recognition and processing of DNA lesions. UvrC both incises the 5' and 3' sides of the lesion. The N-terminal half is responsible for the 3' incision and the C-terminal half is responsible for the 5' incision. In Shewanella halifaxensis (strain HAW-EB4), this protein is UvrABC system protein C.